Here is a 212-residue protein sequence, read N- to C-terminus: MNLLIMGLPGAGKGTQAAKIVEEFGVAHISTGDMFRAAMANQTEMGRLAKSYIDKGELVPDEVTNGIVKERLAEDDIAEKGFLLDGYPRTIEQAHALDATLEELGLRLDGVINIKVDPSCLIERLSGRIINRKTGETFHKVFNPPVDYKEEDYYQREDDKPETVKRRLDVNIAQGESILEHYRKLGLVTDIEGNQEITEVFADVEKALLELK.

10–15 contacts ATP; that stretch reads GAGKGT. Residues 30–59 are NMP; that stretch reads STGDMFRAAMANQTEMGRLAKSYIDKGELV. AMP contacts are provided by residues Thr31, Arg36, 57–59, 86–89, and Gln93; these read ELV and GYPR. The interval 127–159 is LID; it reads GRIINRKTGETFHKVFNPPVDYKEEDYYQREDD. ATP is bound by residues Arg128 and 137–138; that span reads TF. AMP-binding residues include Arg156 and Arg167. ATP is bound at residue Gln195.

The protein belongs to the adenylate kinase family. As to quaternary structure, monomer.

The protein localises to the cytoplasm. The catalysed reaction is AMP + ATP = 2 ADP. Its pathway is purine metabolism; AMP biosynthesis via salvage pathway; AMP from ADP: step 1/1. Catalyzes the reversible transfer of the terminal phosphate group between ATP and AMP. Plays an important role in cellular energy homeostasis and in adenine nucleotide metabolism. In Streptococcus agalactiae serotype Ia (strain ATCC 27591 / A909 / CDC SS700), this protein is Adenylate kinase.